We begin with the raw amino-acid sequence, 771 residues long: DNA polymerase 1 (771 aa).

The protein belongs to the DNA polymerase type-B family.

The catalysed reaction is DNA(n) + a 2'-deoxyribonucleoside 5'-triphosphate = DNA(n+1) + diphosphate. The polypeptide is DNA polymerase 1 (polI) (Pyrococcus abyssi (strain GE5 / Orsay)).